A 350-amino-acid polypeptide reads, in one-letter code: Transmembrane protein 185A (350 aa).

7 consecutive transmembrane segments (helical) span residues 16–36, 41–61, 81–101, 111–131, 177–197, 211–231, and 240–260; these read LIYA…DGII, WAVF…ASVG, FKAM…EVLV, FWLL…AACV, ILMS…VLFL, ITMA…EILL, and AFSC…LMAT. The segment at 298–350 is mediates interaction with MAP1B; sequence DLHHEDNEETEETPVPEPPKIAPMFRKKARVVITQSPGKYVLPPPKLNIEMPD.

It belongs to the TMEM185 family. In terms of assembly, interacts with MAP1B.

Its subcellular location is the cell projection. It is found in the dendrite. It localises to the membrane. This Homo sapiens (Human) protein is Transmembrane protein 185A (TMEM185A).